Consider the following 379-residue polypeptide: Fructose-1,6-bisphosphate aldolase/phosphatase (379 aa).

Asp13 (proton acceptor; for FBP phosphatase activity) is an active-site residue. 4 residues coordinate Mg(2+): Asp13, His20, Asp51, and Asp52. A beta-D-fructose 1,6-bisphosphate-binding site is contributed by His20. His20 serves as a coordination point for dihydroxyacetone phosphate. Tyr89 contributes to the beta-D-fructose 1,6-bisphosphate binding site. Gln93 contacts Mg(2+). 102–103 (GN) lines the beta-D-fructose 1,6-bisphosphate pocket. Asp130 provides a ligand contact to Mg(2+). Lys131 is a binding site for beta-D-fructose 1,6-bisphosphate. Residue Lys131 coordinates dihydroxyacetone phosphate. The active-site Proton donor/acceptor; for FBP aldolase activity is Tyr227. 3 residues coordinate Mg(2+): Lys230, Asp231, and Asp232. Residue Lys230 is the Schiff-base intermediate with DHAP; for FBP aldolase activity of the active site. Residues 240–241 (QS), Arg264, Asp285, and Tyr346 contribute to the beta-D-fructose 1,6-bisphosphate site. Dihydroxyacetone phosphate-binding residues include Arg264 and Asp285.

It belongs to the FBP aldolase/phosphatase family. As to quaternary structure, homooctamer; dimer of tetramers. Mg(2+) is required as a cofactor.

It catalyses the reaction beta-D-fructose 1,6-bisphosphate + H2O = beta-D-fructose 6-phosphate + phosphate. It carries out the reaction beta-D-fructose 1,6-bisphosphate = D-glyceraldehyde 3-phosphate + dihydroxyacetone phosphate. The protein operates within carbohydrate biosynthesis; gluconeogenesis. Catalyzes two subsequent steps in gluconeogenesis: the aldol condensation of dihydroxyacetone phosphate (DHAP) and glyceraldehyde-3-phosphate (GA3P) to fructose-1,6-bisphosphate (FBP), and the dephosphorylation of FBP to fructose-6-phosphate (F6P). This Moorella thermoacetica (strain ATCC 39073 / JCM 9320) protein is Fructose-1,6-bisphosphate aldolase/phosphatase.